Here is a 2514-residue protein sequence, read N- to C-terminus: Probable polyketide synthase 8/35 (2514 aa).

A Ketosynthase family 3 (KS3) domain is found at 11–442 (DKGVAIVGVG…GSNCCLLISE (432 aa)). Active-site for beta-ketoacyl synthase activity residues include cysteine 181, histidine 323, and histidine 362. Residues 635 to 668 (GVNPSFILGHSLGEISAAYCSGMIDLDTFCYTVY) are acyl/malonyl transferase. The active-site For acyl/malonyl transferase activity is the serine 645. The interval 925–1047 (IDHLGLSNSY…ANFQLLDHGN (123 aa)) is N-terminal hotdog fold. The PKS/mFAS DH domain maps to 925–1209 (IDHLGLSNSY…FKSLIPIKHS (285 aa)). The active-site Proton acceptor; for dehydratase activity is histidine 959. The segment at 1064–1209 (NLSKLTKNEL…FKSLIPIKHS (146 aa)) is C-terminal hotdog fold. Aspartate 1122 functions as the Proton donor; for dehydratase activity in the catalytic mechanism. One can recognise a Carrier domain in the interval 2431–2508 (IGNKNIDELF…ISIKMILNSL (78 aa)). Residue serine 2468 is modified to O-(pantetheine 4'-phosphoryl)serine.

The cofactor is pantetheine 4'-phosphate.

Functionally, probable polyketide synthase. This Dictyostelium discoideum (Social amoeba) protein is Probable polyketide synthase 8/35 (pks8).